The following is a 227-amino-acid chain: Phosphoribosylformylglycinamidine synthase subunit PurQ (227 aa).

The Glutamine amidotransferase type-1 domain maps to 3 to 225; that stretch reads FAVIVFPGSN…LKQWRETYVV (223 aa). The active-site Nucleophile is cysteine 86. Residues histidine 194 and glutamate 196 contribute to the active site.

In terms of assembly, part of the FGAM synthase complex composed of 1 PurL, 1 PurQ and 2 PurS subunits.

The protein localises to the cytoplasm. The enzyme catalyses N(2)-formyl-N(1)-(5-phospho-beta-D-ribosyl)glycinamide + L-glutamine + ATP + H2O = 2-formamido-N(1)-(5-O-phospho-beta-D-ribosyl)acetamidine + L-glutamate + ADP + phosphate + H(+). It catalyses the reaction L-glutamine + H2O = L-glutamate + NH4(+). The protein operates within purine metabolism; IMP biosynthesis via de novo pathway; 5-amino-1-(5-phospho-D-ribosyl)imidazole from N(2)-formyl-N(1)-(5-phospho-D-ribosyl)glycinamide: step 1/2. Functionally, part of the phosphoribosylformylglycinamidine synthase complex involved in the purines biosynthetic pathway. Catalyzes the ATP-dependent conversion of formylglycinamide ribonucleotide (FGAR) and glutamine to yield formylglycinamidine ribonucleotide (FGAM) and glutamate. The FGAM synthase complex is composed of three subunits. PurQ produces an ammonia molecule by converting glutamine to glutamate. PurL transfers the ammonia molecule to FGAR to form FGAM in an ATP-dependent manner. PurS interacts with PurQ and PurL and is thought to assist in the transfer of the ammonia molecule from PurQ to PurL. The chain is Phosphoribosylformylglycinamidine synthase subunit PurQ from Bacillus cereus (strain Q1).